We begin with the raw amino-acid sequence, 152 residues long: Pertussis toxin subunit 4 (152 aa).

Positions 1–42 (MLRRFPTRTTAPGQGGARRSRVRALAWLLASGAMTHLSPALA) are cleaved as a signal peptide. Disulfide bonds link Cys73–Cys93 and Cys145–Cys151.

As to quaternary structure, pertussis toxin contains five different chains, S1-S5. They are organized into 2 functional subunits: A, composed of S1 (which is toxic) and B, containing S2, S3, S5, and two copies of S4 (B binds to the membrane receptors). Dimers of S2-S4 and S3-S4 are held together by S5.

The protein resides in the secreted. It localises to the host cell membrane. In terms of biological role, PTX oligomer B binds to receptors on the eukaryotic cell surface and facilitates the translocation of the toxic subunit across the cell membrane. This Bordetella parapertussis (strain 12822 / ATCC BAA-587 / NCTC 13253) protein is Pertussis toxin subunit 4 (ptxD).